The chain runs to 105 residues: U7-hexatoxin-Hi1a (105 aa).

Positions 1-23 are cleaved as a signal peptide; sequence MKTILLFLGVCAVGASMMTGGWT.

The protein belongs to the cystatin family. Contains 2 disulfide bonds. Expressed by the venom gland.

It localises to the secreted. Inhibits various C1 cysteine proteases. This protein has no toxic activity and its function in the venom is unknown. It may play a role as a housekeeping or regulatory protein. The protein is U7-hexatoxin-Hi1a of Hadronyche infensa (Fraser island funnel-web spider).